Reading from the N-terminus, the 229-residue chain is MRCNHTLCVVAITFLVSWSQTLSTPVESRRTESPLVRSVSATEERNIFSQTAEAVAKWGTTTALLNLGKTDDEVKKILGLEKLSGEALKAHSNYHLLDDFITKLRDRKVTGWLHKDTTTDEVWKTLQLDDLFAKLDAKEFRHSDELKTYVQYVKKLDDDIWNYKRASFEPDSSSPLELAVKIHIWAKAKRPSWHVLEMMGNNALKGSKNRKFYREYLLLIKGKKPIIDF.

Positions 1–23 are cleaved as a signal peptide; sequence MRCNHTLCVVAITFLVSWSQTLS. The short motif at 34 to 45 is the RxLR-dEER element; it reads PLVRSVSATEER.

The protein belongs to the RxLR effector family.

Its subcellular location is the secreted. It localises to the host nucleus. Functionally, secreted effector that acts as a RNA silencing suppressor, probably by inhibiting the biogenesis of small RNAs in the host plant, to manipulate host immune responses and promote Phytophthora infection. The chain is Secreted RxLR effector protein PITG_22926 from Phytophthora infestans (strain T30-4) (Potato late blight agent).